The following is a 411-amino-acid chain: Serine hydroxymethyltransferase (411 aa).

(6S)-5,6,7,8-tetrahydrofolate-binding positions include Leu-117 and 121-123; that span reads GHL. Residue Lys-226 is modified to N6-(pyridoxal phosphate)lysine. Residues Glu-241 and 349-351 each bind (6S)-5,6,7,8-tetrahydrofolate; that span reads SPF.

This sequence belongs to the SHMT family. Homodimer. Pyridoxal 5'-phosphate is required as a cofactor.

The protein resides in the cytoplasm. It catalyses the reaction (6R)-5,10-methylene-5,6,7,8-tetrahydrofolate + glycine + H2O = (6S)-5,6,7,8-tetrahydrofolate + L-serine. The protein operates within one-carbon metabolism; tetrahydrofolate interconversion. Its pathway is amino-acid biosynthesis; glycine biosynthesis; glycine from L-serine: step 1/1. Catalyzes the reversible interconversion of serine and glycine with tetrahydrofolate (THF) serving as the one-carbon carrier. This reaction serves as the major source of one-carbon groups required for the biosynthesis of purines, thymidylate, methionine, and other important biomolecules. Also exhibits THF-independent aldolase activity toward beta-hydroxyamino acids, producing glycine and aldehydes, via a retro-aldol mechanism. This is Serine hydroxymethyltransferase from Oceanobacillus iheyensis (strain DSM 14371 / CIP 107618 / JCM 11309 / KCTC 3954 / HTE831).